Here is a 285-residue protein sequence, read N- to C-terminus: Acetyl-coenzyme A carboxylase carboxyl transferase subunit beta (285 aa).

The 257-residue stretch at 29 to 285 folds into the CoA carboxyltransferase N-terminal domain; the sequence is IMTKCPKCKK…ILKIHQEVTK (257 aa). 4 residues coordinate Zn(2+): Cys33, Cys36, Cys52, and Cys55. The segment at 33–55 adopts a C4-type zinc-finger fold; the sequence is CPKCKKIMYTKELAENLNVCFNC.

This sequence belongs to the AccD/PCCB family. Acetyl-CoA carboxylase is a heterohexamer composed of biotin carboxyl carrier protein (AccB), biotin carboxylase (AccC) and two subunits each of ACCase subunit alpha (AccA) and ACCase subunit beta (AccD). The cofactor is Zn(2+).

The protein resides in the cytoplasm. The enzyme catalyses N(6)-carboxybiotinyl-L-lysyl-[protein] + acetyl-CoA = N(6)-biotinyl-L-lysyl-[protein] + malonyl-CoA. The protein operates within lipid metabolism; malonyl-CoA biosynthesis; malonyl-CoA from acetyl-CoA: step 1/1. Component of the acetyl coenzyme A carboxylase (ACC) complex. Biotin carboxylase (BC) catalyzes the carboxylation of biotin on its carrier protein (BCCP) and then the CO(2) group is transferred by the transcarboxylase to acetyl-CoA to form malonyl-CoA. The polypeptide is Acetyl-coenzyme A carboxylase carboxyl transferase subunit beta (Staphylococcus aureus (strain MSSA476)).